The sequence spans 524 residues: Phosphoenolpyruvate carboxykinase (ATP) (524 aa).

Substrate is bound by residues R52, Y188, and K194. ATP is bound by residues K194, H213, and 229 to 237 (GLSGTGKTT). Mn(2+) contacts are provided by K194 and H213. D250 is a Mn(2+) binding site. 3 residues coordinate ATP: E278, R314, and T439. Substrate is bound at residue R314.

The protein belongs to the phosphoenolpyruvate carboxykinase (ATP) family. The cofactor is Mn(2+).

Its subcellular location is the cytoplasm. The enzyme catalyses oxaloacetate + ATP = phosphoenolpyruvate + ADP + CO2. It participates in carbohydrate biosynthesis; gluconeogenesis. Involved in the gluconeogenesis. Catalyzes the conversion of oxaloacetate (OAA) to phosphoenolpyruvate (PEP) through direct phosphoryl transfer between the nucleoside triphosphate and OAA. This chain is Phosphoenolpyruvate carboxykinase (ATP), found in Campylobacter lari (strain RM2100 / D67 / ATCC BAA-1060).